We begin with the raw amino-acid sequence, 557 residues long: Arginine--tRNA ligase (557 aa).

The 'HIGH' region motif lies at 132–142 (ANPTGNLHLGH).

This sequence belongs to the class-I aminoacyl-tRNA synthetase family. Monomer.

The protein localises to the cytoplasm. It catalyses the reaction tRNA(Arg) + L-arginine + ATP = L-arginyl-tRNA(Arg) + AMP + diphosphate. The protein is Arginine--tRNA ligase of Geobacillus thermodenitrificans (strain NG80-2).